An 827-amino-acid chain; its full sequence is Zinc finger protein 438 (827 aa).

3 disordered regions span residues 1 to 31 (MQNS…LQNK), 117 to 173 (LKLP…LYKP), and 193 to 232 (ALTN…AKQD). Polar residues-rich tracts occupy residues 16 to 31 (NIPS…LQNK) and 150 to 159 (PAQTQMCPQM). Over residues 217-226 (PATPASPTPE) the composition is skewed to pro residues. 3 C2H2-type zinc fingers span residues 506 to 528 (HRCH…MNTH), 534 to 556 (YSCR…MKLH), and 566 to 589 (MCCE…KEVH). A disordered region spans residues 682-723 (FPGSKGTQEELVQHASHDWKRHPERGKPEKVHSSSEESHACP). Composition is skewed to basic and acidic residues over residues 688-699 (TQEELVQHASHD) and 706-721 (RGKP…ESHA). The C2H2-type 4 zinc finger occupies 775–798 (FNCLLCAEMLGQKEDLLHHWKHQH).

It localises to the nucleus. Acts as a transcriptional repressor. The sequence is that of Zinc finger protein 438 (ZNF438) from Pongo abelii (Sumatran orangutan).